The following is a 260-amino-acid chain: uncharacterized protein (260 aa).

The ABC transporter domain maps to 4–231 (LHVDHVTHTY…PKELAAMLPF (228 aa)). 40–47 (GPSGCGKT) is an ATP binding site.

This sequence belongs to the ABC transporter superfamily.

This is an uncharacterized protein from Bacillus subtilis (strain 168).